Reading from the N-terminus, the 320-residue chain is Endolytic peptidoglycan transglycosylase RlpA (320 aa).

Belongs to the RlpA family.

In terms of biological role, lytic transglycosylase with a strong preference for naked glycan strands that lack stem peptides. The polypeptide is Endolytic peptidoglycan transglycosylase RlpA (Rickettsia prowazekii (strain Madrid E)).